The sequence spans 330 residues: MEFYASLKSIAMHVPSERVKNAEFQQFLDTSDEWIEKRTGIKERRFANDEEKSSDLGVIAAKQAIERAHLTPKDIDLVVVATLSPDFLAMPSTACVLSAKLGIENKPAFDISAACTGFIYLLSVAKAYVESGMCENVLIVGAEKTSSVLDFKDRGTCILFGDGAGACVIGRTKRLKESILDVQISANGNFSNYLYTPRTLKPTPFNAKEEALEPFLCMKGNEVFKLAVKTLLRDVEMILEKNALKPEDVRLFIPHQANFRIIQAVREHLDFKDEQVVLTVHKYGNTSAASIPMAMGEAYEEGRLKKGDLMLLDAFGGGLTWGSALVYFGG.

Catalysis depends on residues Cys-115 and His-255. The tract at residues 256-260 (QANFR) is ACP-binding. Residue Asn-285 is part of the active site.

This sequence belongs to the thiolase-like superfamily. FabH family. In terms of assembly, homodimer.

The protein localises to the cytoplasm. The catalysed reaction is malonyl-[ACP] + acetyl-CoA + H(+) = 3-oxobutanoyl-[ACP] + CO2 + CoA. It participates in lipid metabolism; fatty acid biosynthesis. Catalyzes the condensation reaction of fatty acid synthesis by the addition to an acyl acceptor of two carbons from malonyl-ACP. Catalyzes the first condensation reaction which initiates fatty acid synthesis and may therefore play a role in governing the total rate of fatty acid production. Possesses both acetoacetyl-ACP synthase and acetyl transacylase activities. Its substrate specificity determines the biosynthesis of branched-chain and/or straight-chain of fatty acids. In Helicobacter pylori (strain P12), this protein is Beta-ketoacyl-[acyl-carrier-protein] synthase III.